The sequence spans 976 residues: Alpha-amylase (976 aa).

Positions 1–33 are cleaved as a signal peptide; the sequence is MKRGKLWGRLVSAAGLSLSIFLSSIGNVSTAYA. The tract at residues 45–98 is disordered; the sequence is TKENTESATDASSNEASDAEADNDTDEAITDASSKELSAENDGASESDSSFDEY. A compositionally biased stretch (low complexity) spans 50–60; sequence ESATDASSNEA. Acidic residues-rich tracts occupy residues 61-73 and 87-96; these read SDAEADNDTDEAI and GASESDSSFD. Ca(2+)-binding residues include Asn-243, Thr-284, and Asp-293. The active-site Nucleophile is the Asp-323. His-327 is a binding site for Ca(2+). Glu-375 functions as the Proton donor in the catalytic mechanism.

This sequence belongs to the glycosyl hydrolase 13 family. Monomer. It depends on Ca(2+) as a cofactor.

The catalysed reaction is Endohydrolysis of (1-&gt;4)-alpha-D-glucosidic linkages in polysaccharides containing three or more (1-&gt;4)-alpha-linked D-glucose units.. This Butyrivibrio fibrisolvens protein is Alpha-amylase (amyA).